The following is an 808-amino-acid chain: LADVEEEQMIQSVDRTAVTGASYFTSVDQSSVHTAEVGSHQPEPLKTSVDKPGSKRTQGEKFFLIHSADWLTTHALFHEVAKLDVVKLLYNEQFAVQGLLRYHTYARFGIEIQVQINPTPFQQGGLICAMVPGDQSYGSIASLTVYPHGLLNCNINNVVRIKVPFIYTRGAYHFKDPQYPVWELTIRVWSELNIGTGTSAYTSLNVLARFTDLELHGLTPLSTQMMRNEFRVSTTENVVNLSNYEDARAKMSFALDQEDWKSDASQGGGIKITHFTTWTSIPTLAAQFPFNASDSVGQQIKVIPVDPYFFQMTNTNPEQKCITALASICQMFCFWRGDLVFDFQVFPTKYHSGRLLFCFVPGNELIDVSHITLKQATTAPCAVMDITGVQSTLRFRVPWISDTPYRVNRYTKSSHQKGEYTAIGKLIVYCYNRLTSPSNVASHVRVNVYLSAINLECFAPLYHAMDVTTQVGDDSGGFSTTVSTKQNVPDPQVGITTVKDLKGRANQGKMDISGVQAPVGAITTIEDPVLAKKVPETFPELKPGESRHTSDHMSIYKFMGRSHFLCTFTFNSNNKEYTFPITLSSTSNPPHGLPATLRWFFNLFQLYRGPLDLTIIITGATDVDGMAWFTPVGLAVDTPWVEKESALSIDYKTALGAVRFNTRRTGNDQIRLPWYSYLYAVSGALDGLGDKTDSTFGLVSIQIANYNHSDEYLSFSCYLSVTEQSEFYFPRAPLNTNAMMSSETVMDRIALGDLESSVDDPRTEEDRKFESHIEKRKPYKELRLEVGKQRLKYAQEELSNEVLPPPRK.

The interval Thr-34 to Lys-55 is disordered. 2 short sequence motifs ((L)YPX(n)L motif) span residues Tyr-146–Leu-150 and Tyr-179–Leu-184.

Belongs to the picornaviridae polyprotein family. Homopentamer. Homooligomer. In terms of assembly, interacts with capsid protein VP2. Interacts with capsid protein VP3. As to quaternary structure, interacts with capsid protein VP1. Interacts with capsid protein VP3. Interacts with capsid protein VP1. Interacts with capsid protein VP2. Specific enzymatic cleavages by viral protease in vivo yield a variety of precursors and mature proteins. Polyprotein processing intermediates are produced, such as P1-2A which is a functional precursor of the structural proteins, VP0 which is a VP4-VP2 precursor, VP1-2A precursor, 3ABC precursor which is a stable and catalytically active precursor of 3A, 3B and 3C proteins, 3AB and 3CD precursors. The assembly signal 2A is removed from VP1-2A by a host protease, possibly host Cathepsin L. This cleavage occurs over a region of 3 amino-acids probably generating VP1 proteins with heterogeneous C-termini. Post-translationally, during virion maturation, immature virions are rendered infectious following cleavage of VP0 into VP4 and VP2. This maturation seems to be an autocatalytic event triggered by the presence of RNA in the capsid and is followed by a conformational change of the particle. In terms of processing, the assembly signal 2A is removed from VP1-2A by a host protease, possibly host Cathepsin L in naked virions. This cleavage does not occur in enveloped virions. This cleavage occurs over a region of 3 amino-acids probably generating VP1 proteins with heterogeneous C-termini. Unlike other picornaviruses, does not seem to be myristoylated.

Its subcellular location is the virion. It localises to the host endosome. The protein resides in the host multivesicular body. Its function is as follows. Capsid proteins VP1, VP2, and VP3 form a closed capsid enclosing the viral positive strand RNA genome. All these proteins contain a beta-sheet structure called beta-barrel jelly roll. Together they form an icosahedral capsid (T=3) composed of 60 copies of each VP1, VP2, and VP3, with a diameter of approximately 300 Angstroms. VP1 is situated at the 12 fivefold axes, whereas VP2 and VP3 are located at the quasi-sixfold axes. The naked capsid interacts with the host receptor HAVCR1 to provide virion attachment to and probably entry into the target cell. Functionally, VP0 precursor is a component of the immature procapsids. Plays a role in the assembly of the 12 pentamers into an icosahedral structure. Has not been detected in mature virions, supposedly owing to its small size. In terms of biological role, precursor component of immature procapsids that corresponds to an extended form of the structural protein VP1. After maturation, possibly by the host Cathepsin L, the assembly signal 2A is cleaved to give rise to the mature VP1 protein. The polypeptide is Genome polyprotein (Human hepatitis A virus genotype IIIA (isolate GA76) (HHAV)).